Consider the following 440-residue polypeptide: Chromosome partition protein MukF (440 aa).

The segment at 208 to 236 (LSETSGTLRELQDTLEAAGDKLQANLLRI) is leucine-zipper.

Belongs to the MukF family. In terms of assembly, interacts, and probably forms a ternary complex, with MukE and MukB via its C-terminal region. The complex formation is stimulated by calcium or magnesium. It is required for an interaction between MukE and MukB.

It is found in the cytoplasm. The protein localises to the nucleoid. In terms of biological role, involved in chromosome condensation, segregation and cell cycle progression. May participate in facilitating chromosome segregation by condensation DNA from both sides of a centrally located replisome during cell division. Not required for mini-F plasmid partitioning. Probably acts via its interaction with MukB and MukE. Overexpression results in anucleate cells. It has a calcium binding activity. The polypeptide is Chromosome partition protein MukF (Edwardsiella ictaluri (strain 93-146)).